Reading from the N-terminus, the 332-residue chain is 2,3-diketo-L-gulonate reductase (332 aa).

The Proton donor role is filled by His44. NAD(+)-binding positions include 168 to 174 (ITMVDMS), 224 to 225 (WK), and 304 to 306 (GHE).

The protein belongs to the LDH2/MDH2 oxidoreductase family. DlgD subfamily. In terms of assembly, homodimer.

The protein resides in the cytoplasm. The enzyme catalyses 3-dehydro-L-gulonate + NAD(+) = 2,3-dioxo-L-gulonate + NADH + H(+). It catalyses the reaction 3-dehydro-L-gulonate + NADP(+) = 2,3-dioxo-L-gulonate + NADPH + H(+). In terms of biological role, catalyzes the reduction of 2,3-diketo-L-gulonate in the presence of NADH, to form 3-keto-L-gulonate. This chain is 2,3-diketo-L-gulonate reductase, found in Salmonella paratyphi A (strain ATCC 9150 / SARB42).